A 786-amino-acid polypeptide reads, in one-letter code: MEATGRGLFPNKPTLPAGPRKRGPLLPAAPPPPSPSSLPLDSLLLHLTAPAPAPAPAPRRSHQTPTPPHSFLSPDAQVLVLAISSHPLPTLAAFLASRRDELLRADITSLLKALELSGHWEWALALLRWAGKEGAADASALEMVVRALGREGQHDAVCALLDETPLPPGSRLDVRAYTTVLHALSRAGRYERALELFAELRRQGVAPTLVTYNVVLDVYGRMGRSWPRIVALLDEMRAAGVEPDGFTASTVIAACCRDGLVDEAVAFFEDLKARGHAPCVVTYNALLQVFGKAGNYTEALRVLGEMEQNGCQPDAVTYNELAGTYARAGFFEEAARCLDTMASKGLLPNAFTYNTVMTAYGNVGKVDEALALFDQMKKTGFVPNVNTYNLVLGMLGKKSRFTVMLEMLGEMSRSGCTPNRVTWNTMLAVCGKRGMEDYVTRVLEGMRSCGVELSRDTYNTLIAAYGRCGSRTNAFKMYNEMTSAGFTPCITTYNALLNVLSRQGDWSTAQSIVSKMRTKGFKPNEQSYSLLLQCYAKGGNVAGIAAIENEVYGSGAVFPSWVILRTLVIANFKCRRLDGMETAFQEVKARGYNPDLVIFNSMLSIYAKNGMYSKATEVFDSIKRSGLSPDLITYNSLMDMYAKCSESWEAEKILNQLKCSQTMKPDVVSYNTVINGFCKQGLVKEAQRVLSEMVADGMAPCAVTYHTLVGGYSSLEMFSEAREVIGYMVQHGLKPMELTYRRVVESYCRAKRFEEARGFLSEVSETDLDFDKKALEAYIEDAQFGR.

Residues 1–71 (MEATGRGLFP…HQTPTPPHSF (71 aa)) are disordered. A chloroplast-targeting transit peptide spans 1 to 95 (MEATGRGLFP…HPLPTLAAFL (95 aa)). A compositionally biased stretch (pro residues) spans 27–36 (PAAPPPPSPS). Residues 37 to 50 (SLPLDSLLLHLTAP) show a composition bias toward low complexity. PPR repeat units lie at residues 137 to 167 (DASA…TPLP), 173 to 207 (DVRA…GVAP), 208 to 243 (TLVT…GVEP), 244 to 278 (DGFT…GHAP), 279 to 313 (CVVT…GCQP), 314 to 348 (DAVT…GLLP), 349 to 383 (NAFT…GFVP), 384 to 418 (NVNT…GCTP), 419 to 453 (NRVT…GVEL), 454 to 488 (SRDT…GFTP), 489 to 523 (CITT…GFKP), 524 to 558 (NEQS…GAVF), 560 to 594 (SWVI…GYNP), 595 to 629 (DLVI…GLSP), 630 to 664 (DLIT…QTMK), 666 to 700 (DVVS…GMAP), 701 to 735 (CAVT…GLKP), and 736 to 770 (MELT…DLDF).

Belongs to the PPR family. P subfamily. As to quaternary structure, forms homodimers.

It is found in the plastid. The protein localises to the chloroplast stroma. Involved in chloroplast mRNA stability. Binds specifically to two intergenic RNA regions of similar sequence located in the chloroplast atpH 5'-UTR and psaJ 3'-UTR, and serves as a barrier to RNA decay. Binding to a specific site in the intergenic region of the chloroplast atpH is sufficient to block 5'-3' and 3'-5' exonucleases. Acts as a protein barrier to block mRNA degradation by exonucleases, and defines processed mRNA termini in chloroplasts. Remodels the structure of the atpH ribosome-binding site in a manner that can account for its ability to enhance translation. Stabilizes a RNA 3'-end downstream from psaI. Binds atpH RNA as a monomer. This Zea mays (Maize) protein is Pentatricopeptide repeat-containing protein 10, chloroplastic.